A 449-amino-acid polypeptide reads, in one-letter code: Mitochondrial distribution and morphology protein 10 (449 aa).

Disordered regions lie at residues 215–244 and 282–307; these read GPSE…DEED and DATP…GAPS. The segment covering 285-301 has biased composition (low complexity); that stretch reads PPSFQLPSSSPTQPSLL.

The protein belongs to the MDM10 family. As to quaternary structure, component of the ER-mitochondria encounter structure (ERMES) or MDM complex, composed of MMM1, MDM10, MDM12 and MDM34. Associates with the mitochondrial outer membrane sorting assembly machinery SAM(core) complex.

The protein resides in the mitochondrion outer membrane. Component of the ERMES/MDM complex, which serves as a molecular tether to connect the endoplasmic reticulum and mitochondria. Components of this complex are involved in the control of mitochondrial shape and protein biogenesis and may function in phospholipid exchange. MDM10 is involved in the late assembly steps of the general translocase of the mitochondrial outer membrane (TOM complex). Functions in the TOM40-specific route of the assembly of outer membrane beta-barrel proteins, including the association of TOM40 with the receptor TOM22 and small TOM proteins. Can associate with the SAM(core) complex as well as the MDM12-MMM1 complex, both involved in late steps of the major beta-barrel assembly pathway, that is responsible for biogenesis of all outer membrane beta-barrel proteins. May act as a switch that shuttles between both complexes and channels precursor proteins into the TOM40-specific pathway. Plays a role in mitochondrial morphology and in the inheritance of mitochondria. The polypeptide is Mitochondrial distribution and morphology protein 10 (Postia placenta (strain ATCC 44394 / Madison 698-R) (Brown rot fungus)).